The chain runs to 853 residues: DNA mismatch repair protein MutS (853 aa).

614-621 (GPNMGGKS) lines the ATP pocket.

Belongs to the DNA mismatch repair MutS family.

Its function is as follows. This protein is involved in the repair of mismatches in DNA. It is possible that it carries out the mismatch recognition step. This protein has a weak ATPase activity. This chain is DNA mismatch repair protein MutS, found in Citrobacter koseri (strain ATCC BAA-895 / CDC 4225-83 / SGSC4696).